Here is a 391-residue protein sequence, read N- to C-terminus: Stearoyl-[acyl-carrier-protein] 9-desaturase 6, chloroplastic (391 aa).

The transit peptide at 1-38 (MLAHKSLLSFTTQWATLMPSPSTFLASRPRGPAKISAV) directs the protein to the chloroplast. 6 residues coordinate Fe cation: E130, E168, H171, E221, E254, and H257.

Belongs to the fatty acid desaturase type 2 family. In terms of assembly, homodimer. Fe(2+) is required as a cofactor.

The protein resides in the plastid. Its subcellular location is the chloroplast. It catalyses the reaction octadecanoyl-[ACP] + 2 reduced [2Fe-2S]-[ferredoxin] + O2 + 2 H(+) = (9Z)-octadecenoyl-[ACP] + 2 oxidized [2Fe-2S]-[ferredoxin] + 2 H2O. Its pathway is lipid metabolism; fatty acid metabolism. Its function is as follows. Converts stearoyl-ACP to oleoyl-ACP by introduction of a cis double bond between carbons 9 and 10 of the acyl chain. In Arabidopsis thaliana (Mouse-ear cress), this protein is Stearoyl-[acyl-carrier-protein] 9-desaturase 6, chloroplastic (S-ACP-DES6).